Consider the following 64-residue polypeptide: DNA gyrase inhibitor YacG (64 aa).

Residues cysteine 6, cysteine 9, cysteine 25, and cysteine 29 each coordinate Zn(2+).

Belongs to the DNA gyrase inhibitor YacG family. Interacts with GyrB. Requires Zn(2+) as cofactor.

Functionally, inhibits all the catalytic activities of DNA gyrase by preventing its interaction with DNA. Acts by binding directly to the C-terminal domain of GyrB, which probably disrupts DNA binding by the gyrase. The sequence is that of DNA gyrase inhibitor YacG from Haemophilus influenzae (strain ATCC 51907 / DSM 11121 / KW20 / Rd).